A 496-amino-acid polypeptide reads, in one-letter code: Probable cytosol aminopeptidase (496 aa).

2 residues coordinate Mn(2+): K258 and D263. K270 is a catalytic residue. Positions 281, 340, and 342 each coordinate Mn(2+). Residue R344 is part of the active site.

It belongs to the peptidase M17 family. The cofactor is Mn(2+).

The protein localises to the cytoplasm. It catalyses the reaction Release of an N-terminal amino acid, Xaa-|-Yaa-, in which Xaa is preferably Leu, but may be other amino acids including Pro although not Arg or Lys, and Yaa may be Pro. Amino acid amides and methyl esters are also readily hydrolyzed, but rates on arylamides are exceedingly low.. The catalysed reaction is Release of an N-terminal amino acid, preferentially leucine, but not glutamic or aspartic acids.. Presumably involved in the processing and regular turnover of intracellular proteins. Catalyzes the removal of unsubstituted N-terminal amino acids from various peptides. This is Probable cytosol aminopeptidase from Helicobacter pylori (strain G27).